The chain runs to 498 residues: ATP synthase subunit beta, chloroplastic (498 aa).

Position 172-179 (Gly172–Thr179) interacts with ATP.

The protein belongs to the ATPase alpha/beta chains family. In terms of assembly, F-type ATPases have 2 components, CF(1) - the catalytic core - and CF(0) - the membrane proton channel. CF(1) has five subunits: alpha(3), beta(3), gamma(1), delta(1), epsilon(1). CF(0) has four main subunits: a(1), b(1), b'(1) and c(9-12).

It localises to the plastid. The protein resides in the chloroplast thylakoid membrane. It carries out the reaction ATP + H2O + 4 H(+)(in) = ADP + phosphate + 5 H(+)(out). Functionally, produces ATP from ADP in the presence of a proton gradient across the membrane. The catalytic sites are hosted primarily by the beta subunits. The polypeptide is ATP synthase subunit beta, chloroplastic (Nandina domestica (Heavenly bamboo)).